A 397-amino-acid chain; its full sequence is Cathepsin E (397 aa).

The first 16 residues, 1-16, serve as a signal peptide directing secretion; sequence MKQFLVVLLILSFVHG. The propeptide at 17–49 is activation peptide; the sequence is IIRVPLKRQKSMRKILKEKGKLSHLWTKQGNEF. The 312-residue stretch at 74–385 folds into the Peptidase A1 domain; it reads YFGQISIGTP…DRGNNRVGFA (312 aa). Residue aspartate 92 is part of the active site. Residues cysteine 105 and cysteine 110 are joined by a disulfide bond. Asparagine 139 carries an N-linked (GlcNAc...) asparagine glycan. The cysteines at positions 268 and 272 are disulfide-linked. Aspartate 277 is a catalytic residue. An intrachain disulfide couples cysteine 310 to cysteine 344.

This sequence belongs to the peptidase A1 family. Homodimer; disulfide-linked. In terms of processing, glycosylated. Contains high mannose-type oligosaccharide. As to expression, found in the larval foregut and adult stomach.

Its subcellular location is the endosome. It catalyses the reaction Similar to cathepsin D, but slightly broader specificity.. Its function is as follows. May have a role in immune function. Probably involved in the processing of antigenic peptides during MHC class II-mediated antigen presentation. The protein is Cathepsin E (CTSE) of Aquarana catesbeiana (American bullfrog).